The following is a 622-amino-acid chain: Phosphomethylpyrimidine synthase (622 aa).

Substrate is bound by residues N226, M255, Y284, H320, 340–342 (SRG), 381–384 (DGLR), and E420. Position 424 (H424) interacts with Zn(2+). Residue Y447 participates in substrate binding. Residue H488 participates in Zn(2+) binding. The [4Fe-4S] cluster site is built by C568, C571, and C576.

Belongs to the ThiC family. Homodimer. The cofactor is [4Fe-4S] cluster.

The enzyme catalyses 5-amino-1-(5-phospho-beta-D-ribosyl)imidazole + S-adenosyl-L-methionine = 4-amino-2-methyl-5-(phosphooxymethyl)pyrimidine + CO + 5'-deoxyadenosine + formate + L-methionine + 3 H(+). It functions in the pathway cofactor biosynthesis; thiamine diphosphate biosynthesis. In terms of biological role, catalyzes the synthesis of the hydroxymethylpyrimidine phosphate (HMP-P) moiety of thiamine from aminoimidazole ribotide (AIR) in a radical S-adenosyl-L-methionine (SAM)-dependent reaction. This Ruthia magnifica subsp. Calyptogena magnifica protein is Phosphomethylpyrimidine synthase.